Reading from the N-terminus, the 161-residue chain is Transcriptional repressor NrdR (161 aa).

A compositionally biased stretch (basic residues) spans 1 to 11; it reads MQCPHCQHHNS. The interval 1 to 21 is disordered; sequence MQCPHCQHHNSRVLESRSSEG. The segment at 3 to 34 is a zinc-finger region; the sequence is CPHCQHHNSRVLESRSSEGGQSIRRRRECLEC. The 91-residue stretch at 49 to 139 folds into the ATP-cone domain; it reads VTVIKQDGER…VYGRFQGIAD (91 aa).

The protein belongs to the NrdR family. It depends on Zn(2+) as a cofactor.

In terms of biological role, negatively regulates transcription of bacterial ribonucleotide reductase nrd genes and operons by binding to NrdR-boxes. The polypeptide is Transcriptional repressor NrdR (Synechocystis sp. (strain ATCC 27184 / PCC 6803 / Kazusa)).